Consider the following 68-residue polypeptide: Molybdenum-pterin-binding protein 2 (68 aa).

The region spanning 2 to 68 is the Mop domain; sequence SISARNQLKG…VKSTDVMILA (67 aa).

Binds one mole of molybdenum per mole of protein and contains a pterin. The polypeptide is Molybdenum-pterin-binding protein 2 (mopII) (Clostridium pasteurianum).